We begin with the raw amino-acid sequence, 442 residues long: Dihydrolipoyllysine-residue acetyltransferase component of pyruvate dehydrogenase complex (442 aa).

The Lipoyl-binding domain maps to 2 to 77 (AFEFKLPDIG…TVGQTIITFD (76 aa)). K43 carries the N6-lipoyllysine modification. The span at 84-97 (LQFKGSDESDDAKT) shows a compositional bias: basic and acidic residues. Positions 84–136 (LQFKGSDESDDAKTEAQVQSTAEAGQDVAKEEQAQEPAKATGAGQQDQAEVDP) are disordered. The region spanning 141 to 178 (IAMPSVRKYAREKGVDIRKVTGSGNNGRVVKEDIDSFV) is the Peripheral subunit-binding (PSBD) domain. The span at 182 to 208 (AQEAAPQETAAPQETAAKPAAAPAPEG) shows a compositional bias: low complexity. The interval 182-215 (AQEAAPQETAAPQETAAKPAAAPAPEGEFPETRE) is disordered. H413 is a catalytic residue.

The protein belongs to the 2-oxoacid dehydrogenase family. As to quaternary structure, forms a 24-polypeptide structural core with octahedral symmetry. It depends on (R)-lipoate as a cofactor.

The catalysed reaction is N(6)-[(R)-dihydrolipoyl]-L-lysyl-[protein] + acetyl-CoA = N(6)-[(R)-S(8)-acetyldihydrolipoyl]-L-lysyl-[protein] + CoA. Functionally, the pyruvate dehydrogenase complex catalyzes the overall conversion of pyruvate to acetyl-CoA and CO(2). It contains multiple copies of three enzymatic components: pyruvate dehydrogenase (E1), dihydrolipoamide acetyltransferase (E2) and lipoamide dehydrogenase (E3). In terms of biological role, the B.subtilis PDH complex also possesses branched-chain 2-oxoacid dehydrogenase (BCDH) activity. The polypeptide is Dihydrolipoyllysine-residue acetyltransferase component of pyruvate dehydrogenase complex (pdhC) (Bacillus subtilis (strain 168)).